The following is an 884-amino-acid chain: Valine--tRNA ligase (884 aa).

The short motif at 46–56 (PNVTGKLHLGH) is the 'HIGH' region element. Residues 520-524 (KMSKS) carry the 'KMSKS' region motif. Lysine 523 contributes to the ATP binding site. A coiled-coil region spans residues 809 to 844 (LADLLNVEEELARLEKELAKWQKELNMVGKKLSNER).

The protein belongs to the class-I aminoacyl-tRNA synthetase family. ValS type 1 subfamily. Monomer.

Its subcellular location is the cytoplasm. The catalysed reaction is tRNA(Val) + L-valine + ATP = L-valyl-tRNA(Val) + AMP + diphosphate. In terms of biological role, catalyzes the attachment of valine to tRNA(Val). As ValRS can inadvertently accommodate and process structurally similar amino acids such as threonine, to avoid such errors, it has a 'posttransfer' editing activity that hydrolyzes mischarged Thr-tRNA(Val) in a tRNA-dependent manner. This chain is Valine--tRNA ligase, found in Streptococcus agalactiae serotype III (strain NEM316).